Here is a 901-residue protein sequence, read N- to C-terminus: MMMVMQPEGLGAGEGRFAGGGGGGEYMEQEEDWDRDLLLDPAWEKQQRKTFTAWCNSHLRKAGTQIENIEEDFRNGLKLMLLLEVISGERLPRPDKGKMRFHKIANVNKALDFIASKGVKLVSIGAEEIVDGNLKMTLGMIWTIILRFAIQDISVEETSAKEGLLLWCQRKTAPYRNVNVQNFHTSWKDGLALCALIHRHRPDLIDYAKLRKDDPIGNLNTAFEVAEKYLDIPKMLDAEDIVNTPKPDEKAIMTYVSCFYHAFAGAEQAETAANRICKVLAVNQENEKLMEEYEKLASELLEWIRRTVPWLENRVGEPSMSAMQRKLEDFRDYRRLHKPPRIQEKCQLEINFNTLQTKLRLSHRPAFMPSEGKLVSDIANAWRGLEQVEKGYEDWLLSEIRRLQRLQHLAEKFRQKASLHEAWTRGKEEMLSQRDYDSALLQEVRALLRRHEAFESDLAAHQDRVEHIAALAQELNELDYHEAASVNSRCQAICDQWDNLGTLTQKRRDALERMEKLLETIDRLQLEFARRAAPFNNWLDGAVEDLQDVWLVHSVEETQSLLTAHDQFKATLPEADRERGAIMGIQGEIQKICQTYGLRPCSTNPYITLSPQDINTKWDMVRKLVPSCDQTLQEELARQQVNERLRRQFAAQANAIGPWIQAKVEEVGRLAAGLAGSLEEQMAGLRQQEQNIINYKTNIDRLEGDHQLLQESLVFDNKHTVYSMEHIRVGWEQLLTSIARTINEVENQVLTRDAKGLSQEQLNEFRASFNHFDRKQNGMMEPDDFRACLISMGYDLGEVEFARIMTMVDPNAAGVVTFQAFIDFMTRETAETDTTEQVVASFKILAGDKNYITPEELRRELPAKQAEYCIRRMVPYKGSGAPAGALDYVAFSSALYGESDL.

M1 is subject to N-acetylmethionine. Residues 1–261 (MMMVMQPEGL…IMTYVSCFYH (261 aa)) are actin-binding. 2 Calponin-homology (CH) domains span residues 45–149 (KQQR…LRFA) and 158–264 (TSAK…HAFA). 4 Spectrin repeats span residues 288–398 (KLME…WLLS), 408–513 (HLAE…ALER), 523–634 (RLQL…TLQE), and 644–747 (RLRR…EVEN). 2 consecutive EF-hand domains span residues 760–795 (EQLN…MGYD) and 796–831 (LGEV…ETAE). Positions 773, 777, 779, 784, 809, and 811 each coordinate Ca(2+).

The protein belongs to the alpha-actinin family. In terms of assembly, homodimer; antiparallel. Also forms heterodimers with ACTN2. Interacts with MYOZ1. As to expression, expression restricted to fast (type 2) skeletal muscle fibers (at protein level).

F-actin cross-linking protein which is thought to anchor actin to a variety of intracellular structures. This is a bundling protein. The protein is Alpha-actinin-3 (ACTN3) of Homo sapiens (Human).